The following is a 728-amino-acid chain: Probable ubiquitin-conjugating enzyme protein 17 (728 aa).

Residues 1–17 (MSSQASQRSSSTSAVAQ) are compositionally biased toward low complexity. 2 disordered regions span residues 1 to 23 (MSSQ…RERR) and 123 to 155 (SSRS…GSTR). A UBC core domain is found at 402–568 (DRTKRIAKEL…IEHATLNYAI (167 aa)). Cys495 serves as the catalytic Glycyl thioester intermediate. Disordered regions lie at residues 649-678 (PFAK…EAAA) and 709-728 (RTQP…STSS). Positions 658–678 (SERLKREQSEKEEKQKKEAAA) are enriched in basic and acidic residues. Residues 710–728 (TQPTGDYSVPSVNEPSTSS) show a composition bias toward polar residues.

It belongs to the ubiquitin-conjugating enzyme family.

The sequence is that of Probable ubiquitin-conjugating enzyme protein 17 (ubc-17) from Caenorhabditis elegans.